Here is a 625-residue protein sequence, read N- to C-terminus: Phosphomethylpyrimidine synthase (625 aa).

Residues Asn-230, Met-259, Tyr-288, His-324, 344 to 346, 385 to 388, and Glu-424 contribute to the substrate site; these read SRG and DGLR. A Zn(2+)-binding site is contributed by His-428. Tyr-451 serves as a coordination point for substrate. Residue His-492 participates in Zn(2+) binding. The [4Fe-4S] cluster site is built by Cys-572, Cys-575, and Cys-580.

It belongs to the ThiC family. As to quaternary structure, homodimer. [4Fe-4S] cluster serves as cofactor.

The enzyme catalyses 5-amino-1-(5-phospho-beta-D-ribosyl)imidazole + S-adenosyl-L-methionine = 4-amino-2-methyl-5-(phosphooxymethyl)pyrimidine + CO + 5'-deoxyadenosine + formate + L-methionine + 3 H(+). Its pathway is cofactor biosynthesis; thiamine diphosphate biosynthesis. In terms of biological role, catalyzes the synthesis of the hydroxymethylpyrimidine phosphate (HMP-P) moiety of thiamine from aminoimidazole ribotide (AIR) in a radical S-adenosyl-L-methionine (SAM)-dependent reaction. The sequence is that of Phosphomethylpyrimidine synthase from Xanthomonas axonopodis pv. citri (strain 306).